The sequence spans 333 residues: uncharacterized protein (333 aa).

The tract at residues 234–333 (PPLAPTSAPA…GLSSEFDSDD (100 aa)) is disordered. Over residues 251 to 265 (VPPPVPAPPTPPPQE) the composition is skewed to pro residues. A compositionally biased stretch (polar residues) spans 324–333 (GLSSEFDSDD).

The protein resides in the cell projection. It is found in the cilium. The protein localises to the flagellum. This is an uncharacterized protein from Homo sapiens (Human).